The primary structure comprises 316 residues: MAGELSIATELPTSPLAMEYVNDFDLMKFDVKKEPLGGRPDRAIRPCNRLQPTGSVSSTPISTPCSSVPSSPSFSPTEQKTHMDELYWMTNSYQQVNPEALNLTPEDAVEALIGPHQMPPQMQGYDSFRGHHHHHHNNHHHQNHHQYQGLPHEEMGLPHQHPHHHHHHHHHQPSPSPSGSSSSSQQLQNSHQQHQNSSAVEDRFSDDQLVSMSVRELNRHLRGFTKDDVIRLKQKRRTLKNRGYAQSCRFKRVQQKHHLENEKTQLIQQVEQLKLEVSRLARERDAYKIKCEKLANTTFREAGSTSDNPSSPEFFM.

2 disordered regions span residues 40–78 (PDRA…SPTE) and 116–204 (HQMP…EDRF). Residues 55–77 (SVSSTPISTPCSSVPSSPSFSPT) show a composition bias toward low complexity. 2 stretches are compositionally biased toward basic residues: residues 130-144 (GHHH…HQNH) and 160-172 (QHPH…HHHQ). Low complexity predominate over residues 177–198 (PSGSSSSSQQLQNSHQQHQNSS). The tract at residues 231 to 256 (RLKQKRRTLKNRGYAQSCRFKRVQQK) is basic motif. Residues 231 to 294 (RLKQKRRTLK…DAYKIKCEKL (64 aa)) form the bZIP domain. Residues 259–280 (LENEKTQLIQQVEQLKLEVSRL) form a leucine-zipper region.

The protein belongs to the bZIP family. Maf subfamily. As to quaternary structure, homodimer or heterodimer with other bHLH-Zip transcription factors. Binds DNA as a homodimer or a heterodimer.

It localises to the nucleus. Functionally, acts as a transcriptional activator or repressor. Implicated in the regulation of cell-type specific gene expression and play a role in inductive events during lens development. This chain is Transcription factor MafB (mafb), found in Xenopus tropicalis (Western clawed frog).